We begin with the raw amino-acid sequence, 204 residues long: Octanoyltransferase (204 aa).

Residues 30 to 204 (CETPDEIWLL…QSFINQLTDV (175 aa)) form the BPL/LPL catalytic domain. Substrate is bound by residues 69–76 (RGGQITYH), 136–138 (SLG), and 149–151 (GIA). Cys-167 acts as the Acyl-thioester intermediate in catalysis.

This sequence belongs to the LipB family.

The protein localises to the cytoplasm. The enzyme catalyses octanoyl-[ACP] + L-lysyl-[protein] = N(6)-octanoyl-L-lysyl-[protein] + holo-[ACP] + H(+). It functions in the pathway protein modification; protein lipoylation via endogenous pathway; protein N(6)-(lipoyl)lysine from octanoyl-[acyl-carrier-protein]: step 1/2. Its function is as follows. Catalyzes the transfer of endogenously produced octanoic acid from octanoyl-acyl-carrier-protein onto the lipoyl domains of lipoate-dependent enzymes. Lipoyl-ACP can also act as a substrate although octanoyl-ACP is likely to be the physiological substrate. The protein is Octanoyltransferase of Nitrosomonas europaea (strain ATCC 19718 / CIP 103999 / KCTC 2705 / NBRC 14298).